A 764-amino-acid chain; its full sequence is MTTAHILGFPRIGAQRELKFALERYWRDGASADAERALVDTGRALRAEHWRIERDAGLDCVTVGDFAWYDHVLTTLAHVGGLPRRFGFDARALTLADYFAAARGNAAQPAMEMTKWFDTNYHYLVPEYSPATTFGPGVEWLFDEVREARALGHRAKAALVGPLTLLWLGKARDGLVERLALLPRLVPAYRALLARLREAGVDWVQIDEPIFSLDLPDAWRDAARPTYEALAPGAPKLLVATYFDDASEHAALLKALPVAGLHVDLVRADAQLDAFVADYPADKVLSCGIVDGRNVWRNDLDRSLARLAPVRDALGERLWVATSCSLLHVPVDLAHEPRLDEELKTWLAFAAQKTREVAALRDALVKGRAAVAAEFDDAAAAAAARRTSARIHNPLVKRRVAALTDADARRASAYSVRAAAQRARFGLPLLPTTTIGSFPQTPEIRRARAAFKQGVLDHLGYLEAMREQVRIAIDKQLAYGLDVLVHGEAERNDMVEYFGELLWGFAITSNGWVQSYGSRCVKPPLVYGDVYLPEPMTVGWASYAQSLSAKPVKGMLTGPVTMLQWSFVRDDQPRATTALQIALALRQETLDLEKAGIGMIQIDEPALREGLPLKARERAAYLDWAVRAFGIAASGVADDTQIHTHMCYSEFGDILPSIAALDADVISIETTRSNMELLDAFETFDYPNEIGPGVYDIHSPRVPDADEIERLILLALERIPAQRLWVNPDCGLKTREWRQVDAALAAMVDAAKRVRQKVEEAVPA.

5-methyltetrahydropteroyltri-L-glutamate contacts are provided by residues 16 to 19 (RELK) and Lys115. L-homocysteine is bound by residues 435-437 (IGS) and Glu488. L-methionine contacts are provided by residues 435–437 (IGS) and Glu488. 5-methyltetrahydropteroyltri-L-glutamate-binding positions include 519 to 520 (RC) and Trp565. Asp603 is a binding site for L-homocysteine. An L-methionine-binding site is contributed by Asp603. Glu609 provides a ligand contact to 5-methyltetrahydropteroyltri-L-glutamate. Residues His645, Cys647, and Glu669 each coordinate Zn(2+). His698 serves as the catalytic Proton donor. Residue Cys730 participates in Zn(2+) binding.

It belongs to the vitamin-B12 independent methionine synthase family. Zn(2+) is required as a cofactor.

It carries out the reaction 5-methyltetrahydropteroyltri-L-glutamate + L-homocysteine = tetrahydropteroyltri-L-glutamate + L-methionine. It functions in the pathway amino-acid biosynthesis; L-methionine biosynthesis via de novo pathway; L-methionine from L-homocysteine (MetE route): step 1/1. In terms of biological role, catalyzes the transfer of a methyl group from 5-methyltetrahydrofolate to homocysteine resulting in methionine formation. The sequence is that of 5-methyltetrahydropteroyltriglutamate--homocysteine methyltransferase from Burkholderia pseudomallei (strain 1106a).